We begin with the raw amino-acid sequence, 111 residues long: Ferredoxin-thioredoxin reductase, catalytic chain (111 aa).

Cys-52 provides a ligand contact to [4Fe-4S] cluster. Cys-54 serves as the catalytic Nucleophile. The cysteines at positions 54 and 84 are disulfide-linked. The [4Fe-4S] cluster site is built by Cys-71, Cys-73, and Cys-82.

Belongs to the ferredoxin thioredoxin reductase beta subunit family. As to quaternary structure, heterodimer of subunit A (variable subunit) and subunit B (catalytic subunit). Heterodimeric FTR forms a complex with ferredoxin and thioredoxin. [4Fe-4S] cluster is required as a cofactor.

Its subcellular location is the plastid. The protein resides in the chloroplast. The catalysed reaction is [thioredoxin]-disulfide + 2 reduced [2Fe-2S]-[ferredoxin] + 2 H(+) = [thioredoxin]-dithiol + 2 oxidized [2Fe-2S]-[ferredoxin]. Catalytic subunit of the ferredoxin-thioredoxin reductase (FTR), which catalyzes the two-electron reduction of thioredoxins by the electrons provided by reduced ferredoxin. The polypeptide is Ferredoxin-thioredoxin reductase, catalytic chain (ftrB) (Cyanidium caldarium (Red alga)).